The primary structure comprises 71 residues: Small ribosomal subunit protein bS21 (71 aa).

It belongs to the bacterial ribosomal protein bS21 family.

In Alcanivorax borkumensis (strain ATCC 700651 / DSM 11573 / NCIMB 13689 / SK2), this protein is Small ribosomal subunit protein bS21.